A 429-amino-acid polypeptide reads, in one-letter code: Ribosomal RNA small subunit methyltransferase B (429 aa).

Residues 254-260 (CAAPGGK), aspartate 277, aspartate 303, and aspartate 322 contribute to the S-adenosyl-L-methionine site. Residue cysteine 375 is the Nucleophile of the active site.

The protein belongs to the class I-like SAM-binding methyltransferase superfamily. RsmB/NOP family.

The protein localises to the cytoplasm. The catalysed reaction is cytidine(967) in 16S rRNA + S-adenosyl-L-methionine = 5-methylcytidine(967) in 16S rRNA + S-adenosyl-L-homocysteine + H(+). Specifically methylates the cytosine at position 967 (m5C967) of 16S rRNA. In Escherichia coli O17:K52:H18 (strain UMN026 / ExPEC), this protein is Ribosomal RNA small subunit methyltransferase B.